The sequence spans 76 residues: Small ribosomal subunit protein bS18 (76 aa).

The protein belongs to the bacterial ribosomal protein bS18 family. Part of the 30S ribosomal subunit. Forms a tight heterodimer with protein bS6.

Binds as a heterodimer with protein bS6 to the central domain of the 16S rRNA, where it helps stabilize the platform of the 30S subunit. The sequence is that of Small ribosomal subunit protein bS18 from Marinomonas sp. (strain MWYL1).